An 835-amino-acid chain; its full sequence is Protein translocase subunit SecA 1 (835 aa).

ATP contacts are provided by residues Gln-85, 103–107 (GEGKT), and Asp-492. Residues 788–807 (VQGEAVHPSSDGEEAKKKPV) form a disordered region. Positions 819, 821, 830, and 831 each coordinate Zn(2+).

The protein belongs to the SecA family. As to quaternary structure, monomer and homodimer. Part of the essential Sec protein translocation apparatus which comprises SecA, SecYEG and auxiliary proteins SecDF. Other proteins may also be involved. The cofactor is Zn(2+).

Its subcellular location is the cell membrane. It localises to the cytoplasm. The enzyme catalyses ATP + H2O + cellular proteinSide 1 = ADP + phosphate + cellular proteinSide 2.. In terms of biological role, part of the Sec protein translocase complex. Interacts with the SecYEG preprotein conducting channel. Has a central role in coupling the hydrolysis of ATP to the transfer of proteins into and across the cell membrane, serving as an ATP-driven molecular motor driving the stepwise translocation of polypeptide chains across the membrane. The protein is Protein translocase subunit SecA 1 of Bacillus thuringiensis (strain Al Hakam).